Here is a 472-residue protein sequence, read N- to C-terminus: Membrane-bound acylglycerophosphatidylinositol O-acyltransferase MBOAT7 (472 aa).

The Cytoplasmic portion of the chain corresponds to 1-5 (MSPEE). Residues 6–22 (WTYLVVLLISIPIGFLF) traverse the membrane as a helical segment. Residues 23-33 (KKAGPGLKRWG) lie on the Lumenal side of the membrane. The chain crosses the membrane as a helical span at residues 34 to 57 (AAAVGLGLTLFTCGPHTLHSLVTI). Over 58–73 (LGTWALIQAQPCSCHA) the chain is Cytoplasmic. Residues 74–93 (LALAWTFSYLLFFRALSLLG) form a helical membrane-spanning segment. The Lumenal portion of the chain corresponds to 94–194 (LPTPTPFTNA…VPSLRPLLRR (101 aa)). A helical transmembrane segment spans residues 195–212 (AWPAPLFGLLFLLSSHLF). Topologically, residues 213 to 231 (PLEAVREDAFYARPLPARL) are cytoplasmic. A helical transmembrane segment spans residues 232–261 (FYMIPVFFAFRMRFYVAWIAAECGCIAAGF). The Lumenal portion of the chain corresponds to 262–426 (GAYPVAAKAR…LSLADTLRYW (165 aa)). N321 carries N-linked (GlcNAc...) asparagine glycosylation. A helical transmembrane segment spans residues 427–447 (ASIYFCIHFLALAALGLGLAL). Residues 448 to 472 (GGGSPSRRKAASQPTSLAPEKLREE) lie on the Cytoplasmic side of the membrane. Residues 453–472 (SRRKAASQPTSLAPEKLREE) form a disordered region.

This sequence belongs to the membrane-bound acyltransferase family. In terms of assembly, interacts with SPTSSA; the interaction facilitates MBOAT7 location to mitochondria-associated membranes (MAMs). In terms of tissue distribution, overexpressed in metastatic breast and bladder carcinomas relative to normal breast epithelium and urothelium.

It localises to the endoplasmic reticulum membrane. The catalysed reaction is a 1-acyl-sn-glycero-3-phospho-(1D-myo-inositol) + (5Z,8Z,11Z,14Z)-eicosatetraenoyl-CoA = a 1-acyl-2-(5Z,8Z,11Z,14Z-eicosatetraenoyl)-sn-glycero-3-phospho-(1D-myo-inositol) + CoA. The enzyme catalyses (5Z,8Z,11Z,14Z)-eicosatetraenoyl-CoA + 1-hexadecanoyl-sn-glycero-3-phosphocholine = 1-hexadecanoyl-2-(5Z,8Z,11Z,14Z-eicosatetraenoyl)-sn-glycero-3-phosphocholine + CoA. It carries out the reaction a 1-acyl-sn-glycero-3-phospho-(1D-myo-inositol) + an acyl-CoA = a 1,2-diacyl-sn-glycero-3-phospho-(1D-myo-inositol) + CoA. It catalyses the reaction 1-octadecanoyl-sn-glycero-3-phospho-(1D-myo-inositol) + (5Z,8Z,11Z,14Z)-eicosatetraenoyl-CoA = 1-octadecanoyl-2-(5Z,8Z,11Z,14Z-eicosatetraenoyl)-sn-glycero-3-phospho-(1D-myo-inositol) + CoA. The protein operates within lipid metabolism; phospholipid metabolism. Its activity is regulated as follows. Activity is inhibited by thimerosal. Acyltransferase which catalyzes the transfer of an acyl group from an acyl-CoA to a lysophosphatidylinositol (1-acylglycerophosphatidylinositol or LPI) leading to the production of a phosphatidylinositol (1,2-diacyl-sn-glycero-3-phosphoinositol or PI) and participates in the reacylation step of the phospholipid remodeling pathway also known as the Lands cycle. Prefers arachidonoyl-CoA as the acyl donor, thus contributing to the regulation of free levels arachidonic acid in cell. In liver, participates in the regulation of triglyceride metabolism through the phosphatidylinositol acyl-chain remodeling regulation. The protein is Membrane-bound acylglycerophosphatidylinositol O-acyltransferase MBOAT7 of Homo sapiens (Human).